Here is a 143-residue protein sequence, read N- to C-terminus: Peptide methionine sulfoxide reductase MsrB (143 aa).

Residues 16–139 form the MsrB domain; it reads DAELRRRLTP…NSAALNFESR (124 aa). Zn(2+) contacts are provided by cysteine 55, cysteine 58, cysteine 104, and cysteine 107. Cysteine 128 acts as the Nucleophile in catalysis.

Belongs to the MsrB Met sulfoxide reductase family. Zn(2+) is required as a cofactor.

The enzyme catalyses L-methionyl-[protein] + [thioredoxin]-disulfide + H2O = L-methionyl-(R)-S-oxide-[protein] + [thioredoxin]-dithiol. The polypeptide is Peptide methionine sulfoxide reductase MsrB (Burkholderia ambifaria (strain ATCC BAA-244 / DSM 16087 / CCUG 44356 / LMG 19182 / AMMD) (Burkholderia cepacia (strain AMMD))).